A 397-amino-acid polypeptide reads, in one-letter code: Serpin B10 (397 aa).

Positions 74–77 (KKRK) match the Nuclear localization signal motif.

It belongs to the serpin family. Ov-serpin subfamily.

The protein localises to the nucleus. It localises to the cytoplasm. Its function is as follows. Protease inhibitor that may play a role in the regulation of protease activities during hematopoiesis and apoptosis induced by TNF. May regulate protease activities in the cytoplasm and in the nucleus. This chain is Serpin B10 (SERPINB10), found in Sorex araneus (Eurasian common shrew).